The sequence spans 784 residues: Cyclin-dependent kinase 11B (784 aa).

Basic and acidic residues predominate over residues 18–60 (QEKKRRKEQEEKAEIKRLKNSDDRDSKRDSLEEGELRDHRMEI). Positions 18–401 (QEKKRRKEQE…EGDYVPDSPA (384 aa)) are disordered. A phosphoserine mark is found at Ser47 and Ser72. Residues 95-113 (EKAHHRKDEKRKEKRRHRS) show a composition bias toward basic residues. 3 stretches are compositionally biased toward basic and acidic residues: residues 114-131 (HSAEGGKHARVKEKEREH), 138-227 (REEQ…DKGK), and 238-263 (PPRERFEMGDNRKPVKEEKVEERDLL). Ser115 bears the Phosphoserine mark. Residue Ser270 is modified to Phosphoserine. Residues 278 to 289 (SAESSSAESGSG) show a composition bias toward low complexity. Composition is skewed to acidic residues over residues 290–353 (SEEE…EDRE) and 372–381 (DSEEGEEEVG). The Protein kinase domain maps to 427–712 (FQCLNRIEEG…AEDGLKHEYF (286 aa)). Residues 433 to 441 (IEEGTYGVV) and Lys456 each bind ATP. Ser471 is subject to Phosphoserine; by CDK7. At Thr477 the chain carries Phosphothreonine; by CDK7. Asp551 acts as the Proton acceptor in catalysis. Ser578 carries the phosphoserine modification. Position 583 is a phosphotyrosine (Tyr583). Thr584 is subject to Phosphothreonine. Residue Lys630 forms a Glycyl lysine isopeptide (Lys-Gly) (interchain with G-Cter in SUMO2) linkage. A disordered region spans residues 722–784 (SMFPTWPAKS…AAGPGFSLKF (63 aa)). A Phosphothreonine modification is found at Thr740. Ser741 carries the phosphoserine modification.

This sequence belongs to the protein kinase superfamily. CMGC Ser/Thr protein kinase family. CDC2/CDKX subfamily. May interact PAK1 and RANBP9. p110C interacts with RNPS1. Interacts with CCND3. Interacts with CCNL1 and CCNL2. Forms complexes with pre-mRNA-splicing factors, including at least SRSF1, SRSF2 AND SRSF7/SLU7. It depends on Mg(2+) as a cofactor. In terms of processing, phosphorylation at Ser-115 creates a binding site for 14-3-3 proteins.

The catalysed reaction is L-seryl-[protein] + ATP = O-phospho-L-seryl-[protein] + ADP + H(+). It catalyses the reaction L-threonyl-[protein] + ATP = O-phospho-L-threonyl-[protein] + ADP + H(+). With respect to regulation, phosphorylation at Thr-437 or Tyr-438 inactivates the enzyme, while phosphorylation at Thr-584 activates it. Plays multiple roles in cell cycle progression, cytokinesis and apoptosis. Involved in pre-mRNA splicing in a kinase activity-dependent manner. May act as a negative regulator of normal cell cycle progression. The protein is Cyclin-dependent kinase 11B (Cdk11b) of Mus musculus (Mouse).